The following is a 339-amino-acid chain: Ketol-acid reductoisomerase (NADP(+)) (339 aa).

The KARI N-terminal Rossmann domain occupies 1–182; it reads MRVYYDRDAD…GGGRSGIIET (182 aa). NADP(+)-binding positions include 24-27, Arg48, Ser51, Thr53, and 83-86; these read YGSQ and DEHQ. The active site involves His108. An NADP(+)-binding site is contributed by Gly134. The region spanning 183-328 is the KARI C-terminal knotted domain; it reads NFREECETDL…ARLRGMMPWI (146 aa). Residues Asp191, Glu195, Glu227, and Glu231 each contribute to the Mg(2+) site. Ser252 contributes to the substrate binding site.

Belongs to the ketol-acid reductoisomerase family. Mg(2+) serves as cofactor.

The enzyme catalyses (2R)-2,3-dihydroxy-3-methylbutanoate + NADP(+) = (2S)-2-acetolactate + NADPH + H(+). It carries out the reaction (2R,3R)-2,3-dihydroxy-3-methylpentanoate + NADP(+) = (S)-2-ethyl-2-hydroxy-3-oxobutanoate + NADPH + H(+). Its pathway is amino-acid biosynthesis; L-isoleucine biosynthesis; L-isoleucine from 2-oxobutanoate: step 2/4. The protein operates within amino-acid biosynthesis; L-valine biosynthesis; L-valine from pyruvate: step 2/4. Its function is as follows. Involved in the biosynthesis of branched-chain amino acids (BCAA). Catalyzes an alkyl-migration followed by a ketol-acid reduction of (S)-2-acetolactate (S2AL) to yield (R)-2,3-dihydroxy-isovalerate. In the isomerase reaction, S2AL is rearranged via a Mg-dependent methyl migration to produce 3-hydroxy-3-methyl-2-ketobutyrate (HMKB). In the reductase reaction, this 2-ketoacid undergoes a metal-dependent reduction by NADPH to yield (R)-2,3-dihydroxy-isovalerate. This chain is Ketol-acid reductoisomerase (NADP(+)), found in Caulobacter vibrioides (strain ATCC 19089 / CIP 103742 / CB 15) (Caulobacter crescentus).